A 245-amino-acid polypeptide reads, in one-letter code: Bax inhibitor 1 (245 aa).

Residues 1–30 (MADTANYINDRFQTFMNGLGDRYEPYVREH) lie on the Cytoplasmic side of the membrane. The chain crosses the membrane as a helical span at residues 31-51 (LSKVYMVLGSTAAATAMGAML). Residues 52–55 (QMRD) are Lumenal-facing. Residues 56-76 (FLDLGVLAAVATLVLVLGLHF) traverse the membrane as a helical segment. Over 77-88 (YKDDGKNYYTRL) the chain is Cytoplasmic. The chain crosses the membrane as a helical span at residues 89–109 (GMLYAFGFCSGQTLGPLLGYI). The Lumenal portion of the chain corresponds to 110 to 115 (CSINPA). The chain crosses the membrane as a helical span at residues 116–136 (IILSALTGTFVTFISLSLSAL). Over 137-142 (LAEQGK) the chain is Cytoplasmic. A helical transmembrane segment spans residues 143 to 163 (YLYLGGMLVSVINTMALLSLF). The Lumenal segment spans residues 164-169 (NMVFKS). Residues 170-190 (YFVQVTQLYVGVFVMAAFIVY) form a helical membrane-spanning segment. Topologically, residues 191-245 (DTQNIVEKCRNGNRDVVQHALDLFFDVLSMFRRLLIILTQKEERKQNERRQNKTK) are cytoplasmic.

It belongs to the BI1 family.

The protein resides in the endoplasmic reticulum membrane. In terms of biological role, suppressor of apoptosis. Modulates unfolded protein response signaling. Negatively regulates autophagy and autophagosome formation, especially during periods of nutrient deprivation, and reduces cell survival during starvation. This Drosophila melanogaster (Fruit fly) protein is Bax inhibitor 1.